We begin with the raw amino-acid sequence, 430 residues long: MFIDKAKIYLKAGKGGDGAVAFRREIYVPAGGPAGGDGGKGGNIIFQVDEGMRTLMDFRYQKHYSAENGEDGKNRNMYGKDGTDLVLKVPPGTIVREENTGEIIADLTGSEDQVVVARGGKGGKGNSHFKSSVRQAPRFAIAGERGQELTVVLELKLIADVGLVGFPNVGKSTLLSVVTSAKPKIANYHFTTLTPNLGVVRTKFGDSFVLADIPGLIEGAHEGTGLGHEFLRHVERTKLLIHVLDVAGLEGRDPLEDFEKINQELHLYNEKLAEKPQVVAANKTDIPGAEDNLEKLKAVLSERGIEVFPISAATSQGLDELLSYVSKRLKELEEIEALKADTAPKEEKVYKYEETEDKYHFTVTRENDVYIVEGRFIERLINSTNFDDIDSLSYFQKVLRNRGVIDRLKEAGISEGDLVKMYSVEFEYFN.

Residues 1-158 (MFIDKAKIYL…LTVVLELKLI (158 aa)) enclose the Obg domain. The region spanning 159 to 330 (ADVGLVGFPN…LLSYVSKRLK (172 aa)) is the OBG-type G domain. GTP contacts are provided by residues 165 to 172 (GFPNVGKS), 190 to 194 (FTTLT), 212 to 215 (DIPG), 282 to 285 (NKTD), and 311 to 313 (SAA). Residues serine 172 and threonine 192 each coordinate Mg(2+). The 80-residue stretch at 351–430 (KYEETEDKYH…MYSVEFEYFN (80 aa)) folds into the OCT domain.

Belongs to the TRAFAC class OBG-HflX-like GTPase superfamily. OBG GTPase family. As to quaternary structure, monomer. The cofactor is Mg(2+).

It localises to the cytoplasm. An essential GTPase which binds GTP, GDP and possibly (p)ppGpp with moderate affinity, with high nucleotide exchange rates and a fairly low GTP hydrolysis rate. Plays a role in control of the cell cycle, stress response, ribosome biogenesis and in those bacteria that undergo differentiation, in morphogenesis control. This Alkaliphilus oremlandii (strain OhILAs) (Clostridium oremlandii (strain OhILAs)) protein is GTPase Obg.